Here is an 89-residue protein sequence, read N- to C-terminus: UPF0335 protein Nham_1221 (89 aa).

This sequence belongs to the UPF0335 family.

The polypeptide is UPF0335 protein Nham_1221 (Nitrobacter hamburgensis (strain DSM 10229 / NCIMB 13809 / X14)).